The following is a 149-amino-acid chain: Nucleoside diphosphate kinase (149 aa).

Residues lysine 9, phenylalanine 57, arginine 85, threonine 91, arginine 102, and asparagine 112 each coordinate ATP. The Pros-phosphohistidine intermediate role is filled by histidine 115.

This sequence belongs to the NDK family. As to quaternary structure, homotetramer. The cofactor is Mg(2+).

It localises to the cytoplasm. It catalyses the reaction a 2'-deoxyribonucleoside 5'-diphosphate + ATP = a 2'-deoxyribonucleoside 5'-triphosphate + ADP. The enzyme catalyses a ribonucleoside 5'-diphosphate + ATP = a ribonucleoside 5'-triphosphate + ADP. Major role in the synthesis of nucleoside triphosphates other than ATP. The ATP gamma phosphate is transferred to the NDP beta phosphate via a ping-pong mechanism, using a phosphorylated active-site intermediate. The protein is Nucleoside diphosphate kinase of Roseiflexus sp. (strain RS-1).